We begin with the raw amino-acid sequence, 262 residues long: Adenosylcobinamide-GDP ribazoletransferase (262 aa).

A run of 6 helical transmembrane segments spans residues 11-31 (LNLF…SWVI), 43-63 (YFGL…WFTQ), 66-86 (LPTS…TGGF), 121-141 (AIVL…LALF), 146-166 (AITG…SLIF), and 199-219 (IFVL…SLWA).

Belongs to the CobS family. Requires Mg(2+) as cofactor.

It localises to the cell inner membrane. It catalyses the reaction alpha-ribazole + adenosylcob(III)inamide-GDP = adenosylcob(III)alamin + GMP + H(+). The catalysed reaction is alpha-ribazole 5'-phosphate + adenosylcob(III)inamide-GDP = adenosylcob(III)alamin 5'-phosphate + GMP + H(+). The protein operates within cofactor biosynthesis; adenosylcobalamin biosynthesis; adenosylcobalamin from cob(II)yrinate a,c-diamide: step 7/7. Joins adenosylcobinamide-GDP and alpha-ribazole to generate adenosylcobalamin (Ado-cobalamin). Also synthesizes adenosylcobalamin 5'-phosphate from adenosylcobinamide-GDP and alpha-ribazole 5'-phosphate. The polypeptide is Adenosylcobinamide-GDP ribazoletransferase (Shewanella denitrificans (strain OS217 / ATCC BAA-1090 / DSM 15013)).